Consider the following 639-residue polypeptide: Testicular spindle-associated protein SHCBP1L (639 aa).

Disordered regions lie at residues 1–25 (MESD…EQTV) and 48–75 (VASP…ETCD). The residue at position 3 (Ser3) is an O-acetylserine. 3 positions are modified to phosphoserine: Ser8, Ser19, and Ser50. A compositionally biased stretch (basic residues) spans 54-63 (VKGKAARRRL). Residues 285–312 (IAQRFKKTLEKYKNKRVELIEYQSNIKE) adopt a coiled-coil conformation. PbH1 repeat units follow at residues 479-500 (SGHL…CVLT), 501-523 (GASL…ELYP), 524-557 (GSIA…NMKV), and 560-582 (APKL…SILQ). Lys556 carries the N6-acetyllysine modification. Lys631 is subject to N6-acetyllysine.

Interacts with HSPA2; this interaction may promote the recruitment of HSPA2 to the spindle. Expressed in pachytene spermatocytes and elongating spermatids inside the seminiferous tubules. Not detected in ovary (at protein level). Testis-specific.

It localises to the cytoplasm. The protein localises to the cytoskeleton. It is found in the spindle. Functionally, testis-specific spindle-associated factor that plays a role in spermatogenesis. In association with HSPA2, participates in the maintenance of spindle integrity during meiosis in male germ cells. This Mus musculus (Mouse) protein is Testicular spindle-associated protein SHCBP1L.